Consider the following 365-residue polypeptide: Peptide chain release factor 2 (365 aa).

Glutamine 252 carries the post-translational modification N5-methylglutamine.

It belongs to the prokaryotic/mitochondrial release factor family. Methylated by PrmC. Methylation increases the termination efficiency of RF2.

The protein resides in the cytoplasm. Peptide chain release factor 2 directs the termination of translation in response to the peptide chain termination codons UGA and UAA. This Yersinia enterocolitica serotype O:8 / biotype 1B (strain NCTC 13174 / 8081) protein is Peptide chain release factor 2.